The sequence spans 205 residues: Meiotic nuclear division protein 1 homolog (205 aa).

The residue at position 2 (Ser2) is an N-acetylserine. A coiled-coil region spans residues 84-173 (HKLEVLESQL…EAANRWTDNI (90 aa)).

The protein belongs to the MND1 family. As to quaternary structure, heterodimer with PSMC3IP/HOP2. MND1-PSMC3IP interacts with DMC1 and RAD51 and binds preferentially to dsDNA.

Its subcellular location is the nucleus. Its function is as follows. Required for proper homologous chromosome pairing and efficient cross-over and intragenic recombination during meiosis. Stimulates both DMC1- and RAD51-mediated homologous strand assimilation, which is required for the resolution of meiotic double-strand breaks. This is Meiotic nuclear division protein 1 homolog from Homo sapiens (Human).